Consider the following 302-residue polypeptide: Putative beta-glucosidase 17 (302 aa).

The N-terminal stretch at 1-27 (MMAVAAATRIAVVVVAALAALAPGARG) is a signal peptide. A beta-D-glucoside is bound by residues Q47, H149, and 194 to 195 (NE). E195 functions as the Proton donor in the catalytic mechanism. C214 and C221 are disulfide-bonded. N-linked (GlcNAc...) asparagine glycosylation occurs at N274.

It belongs to the glycosyl hydrolase 1 family.

The enzyme catalyses Hydrolysis of terminal, non-reducing beta-D-glucosyl residues with release of beta-D-glucose.. The sequence is that of Putative beta-glucosidase 17 (BGLU17) from Oryza sativa subsp. japonica (Rice).